A 379-amino-acid chain; its full sequence is Leukocyte elastase inhibitor (379 aa).

Position 1 is an N-acetylmethionine (M1). K137 and K177 each carry N6-acetyllysine. Phosphoserine is present on S300. The interval 351 to 379 is CARD-binding motif (CBM); that stretch reads NFTADHPFLFFIRHNSSGSILFLGRFSSP.

Belongs to the serpin family. Ov-serpin subfamily. As to quaternary structure, monomer. Interacts (via C-terminus) with CASP1; CASP4 (via CARD domain) and CASP5; these interactions regulate the activity of inflammatory caspases. Interacts with PRTN3. Interacts with GZMH. In human bone marrow, present in all CD45+ populations. Expression levels are highest in the neutrophil lineage, intermediate in monocytic, and lowest in lymphocytic lineage. Within the neutrophil lineage, expression is highest in promyelocytes.

Its subcellular location is the secreted. The protein localises to the cytoplasm. It localises to the cytolytic granule. The protein resides in the early endosome. Functionally, neutrophil serine protease inhibitor that plays an essential role in the regulation of the innate immune response, inflammation and cellular homeostasis. Acts primarily to protect the cell from proteases released in the cytoplasm during stress or infection. These proteases are important in killing microbes but when released from granules, these potent enzymes also destroy host proteins and contribute to mortality. Regulates the activity of the neutrophil proteases elastase, cathepsin G, proteinase-3, chymase, chymotrypsin, and kallikrein-3. Also acts as a potent intracellular inhibitor of GZMH by directly blocking its proteolytic activity. During inflammation, limits the activity of inflammatory caspases CASP1, CASP4 and CASP5 by suppressing their caspase-recruitment domain (CARD) oligomerization and enzymatic activation. When secreted, promotes the proliferation of beta-cells via its protease inhibitory function. In Homo sapiens (Human), this protein is Leukocyte elastase inhibitor (SERPINB1).